Consider the following 473-residue polypeptide: ATP synthase subunit beta (473 aa).

Position 153 to 160 (153 to 160) interacts with ATP; sequence GGAGVGKT.

This sequence belongs to the ATPase alpha/beta chains family. As to quaternary structure, F-type ATPases have 2 components, CF(1) - the catalytic core - and CF(0) - the membrane proton channel. CF(1) has five subunits: alpha(3), beta(3), gamma(1), delta(1), epsilon(1). CF(0) has three main subunits: a(1), b(2) and c(9-12). The alpha and beta chains form an alternating ring which encloses part of the gamma chain. CF(1) is attached to CF(0) by a central stalk formed by the gamma and epsilon chains, while a peripheral stalk is formed by the delta and b chains.

It localises to the cell inner membrane. It catalyses the reaction ATP + H2O + 4 H(+)(in) = ADP + phosphate + 5 H(+)(out). Produces ATP from ADP in the presence of a proton gradient across the membrane. The catalytic sites are hosted primarily by the beta subunits. This Rickettsia bellii (strain RML369-C) protein is ATP synthase subunit beta.